Consider the following 51-residue polypeptide: Cytochrome b559 subunit beta (51 aa).

Residues 26-42 form a helical membrane-spanning segment; the sequence is WLAVHALTVPTIFFLGA. A heme-binding site is contributed by His-30.

Belongs to the PsbE/PsbF family. In terms of assembly, heterodimer of an alpha subunit and a beta subunit. PSII is composed of 1 copy each of membrane proteins PsbA, PsbB, PsbC, PsbD, PsbE, PsbF, PsbH, PsbI, PsbJ, PsbK, PsbL, PsbM, PsbT, PsbX, Psb30/Ycf12, peripheral proteins PsbO, CyanoQ (PsbQ), PsbU, PsbV and a large number of cofactors. It forms dimeric complexes. Heme b serves as cofactor.

It localises to the cell inner membrane. Its function is as follows. This b-type cytochrome is tightly associated with the reaction center of photosystem II (PSII). PSII is a light-driven water:plastoquinone oxidoreductase that uses light energy to abstract electrons from H(2)O, generating O(2) and a proton gradient subsequently used for ATP formation. It consists of a core antenna complex that captures photons, and an electron transfer chain that converts photonic excitation into a charge separation. The polypeptide is Cytochrome b559 subunit beta (Gloeobacter violaceus (strain ATCC 29082 / PCC 7421)).